We begin with the raw amino-acid sequence, 596 residues long: Phosphoenolpyruvate carboxykinase [GTP] (596 aa).

Substrate-binding positions include R77 and 205–207 (YGG). Mn(2+) contacts are provided by K214 and H234. Substrate is bound at residue S256. 257–262 (ACGKTN) contacts GTP. C258 is a catalytic residue. D283 is a Mn(2+) binding site. The interval 362–388 (KKGSTEKAAHPNSRFTAPAKNNPAISP) is disordered. Substrate is bound at residue 373 to 375 (NSR). Residues R375, R406, and 499–502 (YGDN) contribute to the GTP site.

The protein belongs to the phosphoenolpyruvate carboxykinase [GTP] family. Monomer. It depends on Mn(2+) as a cofactor.

It localises to the cytoplasm. The catalysed reaction is oxaloacetate + GTP = phosphoenolpyruvate + GDP + CO2. It participates in carbohydrate biosynthesis; gluconeogenesis. In terms of biological role, catalyzes the conversion of oxaloacetate (OAA) to phosphoenolpyruvate (PEP), the rate-limiting step in the metabolic pathway that produces glucose from lactate and other precursors derived from the citric acid cycle. The chain is Phosphoenolpyruvate carboxykinase [GTP] from Anaeromyxobacter dehalogenans (strain 2CP-C).